The chain runs to 227 residues: Venom allergen 5 (227 aa).

The signal sequence occupies residues 1–21; sequence MKISCLICLVIVLTIIHLSQA. 4 disulfide bridges follow: Cys-25/Cys-37, Cys-29/Cys-125, Cys-49/Cys-117, and Cys-193/Cys-210. Positions 69 to 212 constitute an SCP domain; it reads EEHNRFRQKV…MQIHYLICNY (144 aa).

Belongs to the CRISP family. Venom allergen 5-like subfamily. Expressed by the venom gland.

It localises to the secreted. This is Venom allergen 5 from Polistes dominula (European paper wasp).